A 491-amino-acid chain; its full sequence is Serine/threonine-protein kinase 3 (491 aa).

N-acetylmethionine is present on Met1. Ser15 carries the phosphoserine modification. The Protein kinase domain occupies 27-278 (FDVLEKLGEG…ATQLLQHPFI (252 aa)). Residues 33–41 (LGEGSYGSV) and Lys56 contribute to the ATP site. Phosphothreonine; by PKB/AKT1 is present on Thr117. Asp146 acts as the Proton acceptor in catalysis. Mg(2+) contacts are provided by Asn151 and Asp164. Thr180 is subject to Phosphothreonine; by autocatalysis. A coiled-coil region spans residues 291–324 (ITEGMEIKAKRHEEQQRELEDEEENSDEDELDSH). 2 disordered regions span residues 301–343 (RHEE…TSTM) and 370–392 (EDEEEEDGTMKRNATSPQVQRPS). Positions 309 to 321 (LEDEEENSDEDEL) are enriched in acidic residues. Ser316 is subject to Phosphoserine. The segment covering 326–343 (MVKTSSEGVGTMRATSTM) has biased composition (polar residues). Thr336 and Thr378 each carry phosphothreonine. A compositionally biased stretch (polar residues) spans 381-390 (RNATSPQVQR). Thr384 is modified (phosphothreonine; by PKB/AKT1). Phosphoserine is present on residues Ser385 and Ser444. The region spanning 437–484 (FDFLKNLSLEELQMRLKALDPMMEREIEELHQRYSAKRQPILDAMDAK) is the SARAH domain.

The protein belongs to the protein kinase superfamily. STE Ser/Thr protein kinase family. STE20 subfamily. Homodimer; mediated via the coiled-coil region. Interacts with NORE1, which inhibits autoactivation. Interacts with and stabilizes SAV1. Interacts with RAF1, which prevents dimerization and phosphorylation. Interacts with RASSF1. Interacts (via SARAH domain) with isoform 1 of NEK2. Interacts with ESR1 only in the presence of SAV1. Interacts with PKB/AKT1. Forms a tripartite complex with MOBKL1B and STK38. Interacts with RASSF2 (via SARAH domain). Interacts with DLG5 (via PDZ domain 3). Interacts with LATS1; this interaction is inhibited in the presence of DLG5. Interacts with MARK3 in the presence of DLG5. Interacts with RASSF5; this interaction inhibits STK3 autoactivation through heterodimerization. Interacts (when phosphorylated) with SLMAP (via FHA domain); the interaction associates STK3 with the STRIPAK complex. The cofactor is Mg(2+). Post-translationally, autophosphorylated on two residues Thr-174 and Thr-180, leading to activation. Phosphorylation at Thr-117 and Thr-384 by PKB/AKT1, leads to inhibition of its: cleavage, kinase activity, autophosphorylation at Thr-180, binding to RASSF1 and nuclear translocation, and increase in its binding to RAF1. Phosphorylated at Ser-15 by PLK1, leading to activation. Proteolytically cleaved by caspase-3 during apoptosis. Proteolytic cleavage results in kinase activation and nuclear translocation of the truncated form (MST1/N). In terms of processing, ubiquitinated by TRIM69; leading to its redistribution to the perinuclear cytoskeleton.

It localises to the cytoplasm. It is found in the nucleus. It carries out the reaction L-seryl-[protein] + ATP = O-phospho-L-seryl-[protein] + ADP + H(+). The enzyme catalyses L-threonyl-[protein] + ATP = O-phospho-L-threonyl-[protein] + ADP + H(+). Inhibited by the C-terminal non-catalytic region. Activated by caspase-cleavage. Full activation also requires homodimerization and autophosphorylation of Thr-180, which are inhibited by the proto-oncogene product RAF1. Activated by RASSF1 which acts by preventing its dephosphorylation. When autophosphorylated at Thr-180, recruits STRIPAK complex and promotes PP2A-mediated dephosphorylation and inactivation of STK3. Functionally, stress-activated, pro-apoptotic kinase which, following caspase-cleavage, enters the nucleus and induces chromatin condensation followed by internucleosomal DNA fragmentation. Key component of the Hippo signaling pathway which plays a pivotal role in organ size control and tumor suppression by restricting proliferation and promoting apoptosis. The core of this pathway is composed of a kinase cascade wherein STK3/MST2 and STK4/MST1, in complex with its regulatory protein SAV1, phosphorylates and activates LATS1/2 in complex with its regulatory protein MOB1, which in turn phosphorylates and inactivates YAP1 oncoprotein and WWTR1/TAZ. Phosphorylation of YAP1 by LATS2 inhibits its translocation into the nucleus to regulate cellular genes important for cell proliferation, cell death, and cell migration. STK3/MST2 and STK4/MST1 are required to repress proliferation of mature hepatocytes, to prevent activation of facultative adult liver stem cells (oval cells), and to inhibit tumor formation. Phosphorylates NKX2-1. Phosphorylates NEK2 and plays a role in centrosome disjunction by regulating the localization of NEK2 to centrosomes, and its ability to phosphorylate CROCC and CEP250. In conjunction with SAV1, activates the transcriptional activity of ESR1 through the modulation of its phosphorylation. Positively regulates RAF1 activation via suppression of the inhibitory phosphorylation of RAF1 on 'Ser-259'. Phosphorylates MOBKL1A and RASSF2. Phosphorylates MOBKL1B on 'Thr-74'. Acts cooperatively with MOBKL1B to activate STK38. The polypeptide is Serine/threonine-protein kinase 3 (Stk3) (Rattus norvegicus (Rat)).